The chain runs to 285 residues: Acetyl-coenzyme A carboxylase carboxyl transferase subunit beta (285 aa).

The CoA carboxyltransferase N-terminal domain occupies 29-285 (IMTKCPNCKK…ILKIHQEVSN (257 aa)). Residues C33, C36, C52, and C55 each contribute to the Zn(2+) site. The C4-type zinc finger occupies 33 to 55 (CPNCKKIMYTKELNENLNVCFNC).

The protein belongs to the AccD/PCCB family. As to quaternary structure, acetyl-CoA carboxylase is a heterohexamer composed of biotin carboxyl carrier protein (AccB), biotin carboxylase (AccC) and two subunits each of ACCase subunit alpha (AccA) and ACCase subunit beta (AccD). Zn(2+) is required as a cofactor.

The protein localises to the cytoplasm. The enzyme catalyses N(6)-carboxybiotinyl-L-lysyl-[protein] + acetyl-CoA = N(6)-biotinyl-L-lysyl-[protein] + malonyl-CoA. It participates in lipid metabolism; malonyl-CoA biosynthesis; malonyl-CoA from acetyl-CoA: step 1/1. Component of the acetyl coenzyme A carboxylase (ACC) complex. Biotin carboxylase (BC) catalyzes the carboxylation of biotin on its carrier protein (BCCP) and then the CO(2) group is transferred by the transcarboxylase to acetyl-CoA to form malonyl-CoA. The polypeptide is Acetyl-coenzyme A carboxylase carboxyl transferase subunit beta (Staphylococcus epidermidis (strain ATCC 35984 / DSM 28319 / BCRC 17069 / CCUG 31568 / BM 3577 / RP62A)).